The sequence spans 1141 residues: Tetratricopeptide repeat protein 17 (1141 aa).

One copy of the TPR 1 repeat lies at 295–328 (FTSYYTLGNIYAMLGEYNHSVLCYDHALQARPGF). The stretch at 340–382 (CQQKLEQKLEAQHRSLQRTLNELKEYQKQHDHYLRQQEILEKH) forms a coiled coil. TPR repeat units lie at residues 619–652 (WLIL…APLQ), 689–722 (PLTF…TTKC), 1014–1048 (SWVL…APHQ), 1051–1084 (DVPL…APHF), and 1085–1118 (AVNH…QPEF).

The protein belongs to the TTC17 family. In terms of assembly, interacts with CATIP. In terms of tissue distribution, expressed in germ cells as well as in somatic cells of the testis (at protein level).

It is found in the cytoplasm. The protein localises to the cell membrane. It localises to the cytoskeleton. Its function is as follows. Plays a role in primary ciliogenesis by modulating actin polymerization. This Homo sapiens (Human) protein is Tetratricopeptide repeat protein 17 (TTC17).